Here is a 1209-residue protein sequence, read N- to C-terminus: DNA-directed RNA polymerase subunit beta'' (1209 aa).

Cysteine 233, cysteine 308, cysteine 315, and cysteine 318 together coordinate Zn(2+).

Belongs to the RNA polymerase beta' chain family. RpoC2 subfamily. In terms of assembly, in plastids the minimal PEP RNA polymerase catalytic core is composed of four subunits: alpha, beta, beta', and beta''. When a (nuclear-encoded) sigma factor is associated with the core the holoenzyme is formed, which can initiate transcription. Requires Zn(2+) as cofactor.

The protein resides in the plastid. Its subcellular location is the chloroplast. It carries out the reaction RNA(n) + a ribonucleoside 5'-triphosphate = RNA(n+1) + diphosphate. Functionally, DNA-dependent RNA polymerase catalyzes the transcription of DNA into RNA using the four ribonucleoside triphosphates as substrates. The chain is DNA-directed RNA polymerase subunit beta'' from Pinus koraiensis (Korean pine).